The following is a 145-amino-acid chain: D-aminoacyl-tRNA deacylase (145 aa).

The Gly-cisPro motif, important for rejection of L-amino acids motif lies at 137–138 (GP).

It belongs to the DTD family. As to quaternary structure, homodimer.

It localises to the cytoplasm. It catalyses the reaction glycyl-tRNA(Ala) + H2O = tRNA(Ala) + glycine + H(+). The catalysed reaction is a D-aminoacyl-tRNA + H2O = a tRNA + a D-alpha-amino acid + H(+). Its function is as follows. An aminoacyl-tRNA editing enzyme that deacylates mischarged D-aminoacyl-tRNAs. Also deacylates mischarged glycyl-tRNA(Ala), protecting cells against glycine mischarging by AlaRS. Acts via tRNA-based rather than protein-based catalysis; rejects L-amino acids rather than detecting D-amino acids in the active site. By recycling D-aminoacyl-tRNA to D-amino acids and free tRNA molecules, this enzyme counteracts the toxicity associated with the formation of D-aminoacyl-tRNA entities in vivo and helps enforce protein L-homochirality. This chain is D-aminoacyl-tRNA deacylase, found in Psychromonas ingrahamii (strain DSM 17664 / CCUG 51855 / 37).